We begin with the raw amino-acid sequence, 655 residues long: E3 ubiquitin-protein ligase TRIM32 (655 aa).

The segment at 21-66 adopts an RING-type zinc-finger fold; the sequence is CPICMESFTEEQLRPKLLHCGHTICRQCLEKLLASSINGVRCPFCS. Phosphoserine; by CHEK2 is present on serine 56. The B box-type; atypical zinc-finger motif lies at 96 to 139; it reads VGLLMCRGCGRRLPRQFCRSCGVVLCEPCREADHQPPGHCTLPV. Zn(2+) contacts are provided by cysteine 101, cysteine 104, cysteine 124, and histidine 129. A coiled-coil region spans residues 139-198; it reads VKEAAEERRRDFGEKLTRLRELTGELQRRKAALEGVSRDLQARYKAVLQEYGHEERRIQE. The disordered stretch occupies residues 327–347; that stretch reads MDMSPEEVAPSPRASPAKQRS. 3 positions are modified to phosphoserine: serine 330, serine 337, and serine 341. 5 NHL repeats span residues 360–403, 417–460, 461–501, 564–607, and 608–648; these read LKKM…FNRK, DSFV…YTMD, GHCV…FTVD, GRQI…FPKG, and GGYS…YSYH.

This sequence belongs to the TRIM/RBCC family. As to quaternary structure, it self-associates. Interacts with DTNBP1. Interacts with PIAS4/PIASY upon treatment with UVB and TNF-alpha. Interacts with AMBRA1; promoting activation of ULK1 through unanchored 'Lys-63'-linked polyubiquitin chains. Interacts with TICAM1 and TAX1BP1; these interactions target TICAM1 to TAX1BP1-mediated selective autophagic degradation. Post-translationally, ubiquitinated. Phosphorylation at Ser-56 by CHEK2 under oxidative stress, activates the E3 ligase activity and promotes ATG7 ubiquitination leading to positive regulation of the autophagosme assembly. In terms of tissue distribution, ubiquitous. High expression in brain.

Its subcellular location is the cytoplasm. The catalysed reaction is S-ubiquitinyl-[E2 ubiquitin-conjugating enzyme]-L-cysteine + [acceptor protein]-L-lysine = [E2 ubiquitin-conjugating enzyme]-L-cysteine + N(6)-ubiquitinyl-[acceptor protein]-L-lysine.. Its pathway is protein modification; protein ubiquitination. E3 ubiquitin ligase that plays a role in various biological processes including neural stem cell differentiation, innate immunity, inflammatory resonse and autophagy. Plays a role in virus-triggered induction of IFN-beta and TNF-alpha by mediating the ubiquitination of STING1. Mechanistically, targets STING1 for 'Lys-63'-linked ubiquitination which promotes the interaction of STING1 with TBK1. Regulates bacterial clearance and promotes autophagy in Mycobacterium tuberculosis-infected macrophages. Negatively regulates TLR3/4-mediated innate immune and inflammatory response by triggering the autophagic degradation of TICAM1 in an E3 activity-independent manner. Plays an essential role in oxidative stress induced cell death by inducing loss of transmembrane potential and enhancing mitochondrial reactive oxygen species (ROS) production during oxidative stress conditions. Ubiquitinates XIAP and targets it for proteasomal degradation. Ubiquitinates DTNBP1 (dysbindin) and promotes its degradation. May ubiquitinate BBS2. Ubiquitinates PIAS4/PIASY and promotes its degradation in keratinocytes treated with UVB and TNF-alpha. Also acts as a regulator of autophagy by mediating formation of unanchored 'Lys-63'-linked polyubiquitin chains that activate ULK1: interaction with AMBRA1 is required for ULK1 activation. Positively regulates dendritic branching by promoting ubiquitination and subsequent degradation of the epigenetic factor CDYL. Under metabolic stress and phosphorylation by CHK2, mediates 'Lys-63'-linked ubiquitination of ATG7 at 'Lys-41' to initiate autophagy. This chain is E3 ubiquitin-protein ligase TRIM32, found in Mus musculus (Mouse).